Consider the following 951-residue polypeptide: Zinc fingers and homeoboxes protein 3 (951 aa).

The segment at 1–66 (MASKRKSTTP…SSTDGSALAN (66 aa)) is disordered. Residues 42 to 58 (PSEAPEASSEAAPNPSS) show a composition bias toward low complexity. C2H2-type zinc fingers lie at residues 77-100 (YSCK…TSEH) and 109-132 (FVCT…AKCH). The segment at 198–249 (KENAPTQPGGEALPKPLAGETEGKEGDHTFINGATPVSQASANSTKPPHTAN) is disordered. A compositionally biased stretch (polar residues) spans 232–244 (TPVSQASANSTKP). The segment at 237–481 (ASANSTKPPH…LLTACPSITS (245 aa)) is required for homodimerization and interaction with NFYA. Positions 297-495 (LSSIPTYNAA…DANIYKNKKS (199 aa)) are required for repressor activity. DNA-binding regions (homeobox) lie at residues 298–357 (SSIP…GISW) and 487–546 (ANIY…RNLK). The interval 490–548 (YKNKKSHEQLSALKGSFCRNQFPGQSEVEHLTKVTGLSTREVRKWFSDRRYHCRNLKGT) is required for nuclear localization. S597 carries the post-translational modification Phosphoserine. The segment at residues 605–664 (TPTKYKERAPEQLRVLESSFAQNPLPPEEELDRLRSETKMTRREIDGWFSERRKRVNAEE) is a DNA-binding region (homeobox 3). Disordered stretches follow at residues 621-642 (ESSF…RSET) and 661-702 (NAEE…NGSS). Positions 661–674 (NAEETKKADGHAPQ) are enriched in basic and acidic residues. Residues 675-690 (EEAEGAEEEGRDEELA) are compositionally biased toward acidic residues. Phosphoserine is present on residues S701 and S716. 2 consecutive DNA-binding regions (homeobox) follow at residues 759–818 (PSRV…KNGQ) and 830–889 (FPPG…TRAV). Positions 885–951 (ETRAVADTSS…PQSGRQLETD (67 aa)) are disordered. Phosphoserine is present on residues S922 and S941. Residues 937-951 (FDTSSPQSGRQLETD) are compositionally biased toward polar residues.

This sequence belongs to the ZHX family. In terms of assembly, homodimer (via homeobox domain 1). Heterodimer with ZHX1 (via homeobox domain 1). Heterodimer with ZHX2 (via homeobox domain 1). Heterodimerization with ZHX1 is a prerequisite for repressor activity. Interacts with NFYA. Widely expressed.

It localises to the cytoplasm. The protein localises to the nucleus. Functionally, acts as a transcriptional repressor. Involved in the early stages of mesenchymal stem cell (MSC) osteogenic differentiation. Is a regulator of podocyte gene expression during primary glomerula disease. Binds to promoter DNA. The chain is Zinc fingers and homeoboxes protein 3 (Zhx3) from Rattus norvegicus (Rat).